The following is a 624-amino-acid chain: Probable potassium transport system protein Kup 1 (624 aa).

The next 12 membrane-spanning stretches (helical) occupy residues 10-30, 48-68, 94-114, 133-153, 159-179, 210-230, 242-262, 270-290, 331-351, 363-383, 388-408, and 413-433; these read LALGALGVVFGDIGTSPLYAL, LSLIFWSLIIIVSFKYLMIIF, PLFYIVAIFGAGLLLGDGMLT, LYPYVLPIASVILVLLFSLQA, IGYLFGPLILIWFITIAILGI, FLLGGIFLVVTGGEALFADIG, FFIALPCLLLNYFGQGANLIV, PFFMIAPPWFYLPLIIIATVA, IYVPQINFILFIGTMAFCLAF, IAVNLEMLLVDAMVAYAAVSI, TFNVIFLFGLFLLIDLAFLGA, and FITGGWVPIVLAFFIAFIMYS.

This sequence belongs to the HAK/KUP transporter (TC 2.A.72) family.

It localises to the cell inner membrane. The enzyme catalyses K(+)(in) + H(+)(in) = K(+)(out) + H(+)(out). Transport of potassium into the cell. Likely operates as a K(+):H(+) symporter. This is Probable potassium transport system protein Kup 1 from Legionella pneumophila subsp. pneumophila (strain Philadelphia 1 / ATCC 33152 / DSM 7513).